The primary structure comprises 305 residues: UDP-3-O-acyl-N-acetylglucosamine deacetylase (305 aa).

Residues His-78, His-237, and Asp-241 each contribute to the Zn(2+) site. The active-site Proton donor is the His-264.

It belongs to the LpxC family. Zn(2+) serves as cofactor.

It catalyses the reaction a UDP-3-O-[(3R)-3-hydroxyacyl]-N-acetyl-alpha-D-glucosamine + H2O = a UDP-3-O-[(3R)-3-hydroxyacyl]-alpha-D-glucosamine + acetate. It functions in the pathway glycolipid biosynthesis; lipid IV(A) biosynthesis; lipid IV(A) from (3R)-3-hydroxytetradecanoyl-[acyl-carrier-protein] and UDP-N-acetyl-alpha-D-glucosamine: step 2/6. Catalyzes the hydrolysis of UDP-3-O-myristoyl-N-acetylglucosamine to form UDP-3-O-myristoylglucosamine and acetate, the committed step in lipid A biosynthesis. In Cupriavidus necator (strain ATCC 17699 / DSM 428 / KCTC 22496 / NCIMB 10442 / H16 / Stanier 337) (Ralstonia eutropha), this protein is UDP-3-O-acyl-N-acetylglucosamine deacetylase.